The sequence spans 179 residues: uncharacterized protein (179 aa).

3 helical membrane passes run 29-49, 76-96, and 97-117; these read LLGI…GPLI, AKHM…DAYS, and GAII…LLWA.

Belongs to the DP1 family.

It localises to the membrane. This is an uncharacterized protein from Encephalitozoon cuniculi (strain GB-M1) (Microsporidian parasite).